The sequence spans 609 residues: 1-deoxy-D-xylulose-5-phosphate synthase (609 aa).

Residues histidine 77 and 118–120 each bind thiamine diphosphate; that span reads GHS. Aspartate 149 lines the Mg(2+) pocket. Thiamine diphosphate-binding positions include 150-151, asparagine 178, tyrosine 259, and glutamate 342; that span reads GA. A Mg(2+)-binding site is contributed by asparagine 178.

The protein belongs to the transketolase family. DXPS subfamily. In terms of assembly, homodimer. Mg(2+) serves as cofactor. Thiamine diphosphate is required as a cofactor.

It carries out the reaction D-glyceraldehyde 3-phosphate + pyruvate + H(+) = 1-deoxy-D-xylulose 5-phosphate + CO2. The protein operates within metabolic intermediate biosynthesis; 1-deoxy-D-xylulose 5-phosphate biosynthesis; 1-deoxy-D-xylulose 5-phosphate from D-glyceraldehyde 3-phosphate and pyruvate: step 1/1. Its function is as follows. Catalyzes the acyloin condensation reaction between C atoms 2 and 3 of pyruvate and glyceraldehyde 3-phosphate to yield 1-deoxy-D-xylulose-5-phosphate (DXP). The sequence is that of 1-deoxy-D-xylulose-5-phosphate synthase from Listeria monocytogenes serotype 4b (strain CLIP80459).